The following is a 360-amino-acid chain: Phospho-N-acetylmuramoyl-pentapeptide-transferase (360 aa).

Helical transmembrane passes span 21–41 (YLTL…FIVG), 70–90 (GTPT…TLLW), 97–117 (YVWA…VDDY), 134–154 (YLWQ…TASS), 168–188 (VVLN…VGSS), 199–219 (GLAI…AYAS), 236–256 (AGEL…FLWF), 263–283 (VFMG…VAVL), 288–308 (IVLM…MLQV), and 338–358 (VIVR…ATLK).

This sequence belongs to the glycosyltransferase 4 family. MraY subfamily. Requires Mg(2+) as cofactor.

It localises to the cell inner membrane. The catalysed reaction is UDP-N-acetyl-alpha-D-muramoyl-L-alanyl-gamma-D-glutamyl-meso-2,6-diaminopimeloyl-D-alanyl-D-alanine + di-trans,octa-cis-undecaprenyl phosphate = di-trans,octa-cis-undecaprenyl diphospho-N-acetyl-alpha-D-muramoyl-L-alanyl-D-glutamyl-meso-2,6-diaminopimeloyl-D-alanyl-D-alanine + UMP. It participates in cell wall biogenesis; peptidoglycan biosynthesis. Functionally, catalyzes the initial step of the lipid cycle reactions in the biosynthesis of the cell wall peptidoglycan: transfers peptidoglycan precursor phospho-MurNAc-pentapeptide from UDP-MurNAc-pentapeptide onto the lipid carrier undecaprenyl phosphate, yielding undecaprenyl-pyrophosphoryl-MurNAc-pentapeptide, known as lipid I. The sequence is that of Phospho-N-acetylmuramoyl-pentapeptide-transferase from Methylococcus capsulatus (strain ATCC 33009 / NCIMB 11132 / Bath).